Reading from the N-terminus, the 370-residue chain is L-lactate oxidase (370 aa).

Positions 8 to 367 (DPDGMPVTLS…TPDLLTGFSG (360 aa)) constitute an FMN hydroxy acid dehydrogenase domain. Y34 is a pyruvate binding site. FMN contacts are provided by residues 87-89 (PMA), S116, and Q136. Y138 serves as a coordination point for pyruvate. Residue T164 coordinates FMN. A pyruvate-binding site is contributed by R173. FMN is bound by residues K238 and S260. Residues H262 and R265 each coordinate pyruvate. Catalysis depends on H262, which acts as the Proton acceptor. FMN contacts are provided by residues 293–297 (DGGIR) and R317.

It belongs to the FMN-dependent alpha-hydroxy acid dehydrogenase family. In terms of assembly, homotetramer. It depends on FMN as a cofactor.

It catalyses the reaction (S)-lactate + O2 = pyruvate + H2O2. It carries out the reaction a (2S)-2-hydroxycarboxylate + O2 = a 2-oxocarboxylate + H2O2. The catalysed reaction is glycolate + O2 = glyoxylate + H2O2. The enzyme catalyses 2-hydroxyoctadecanoate + O2 = 2-oxooctadecanoate + H2O2. Its function is as follows. Catalyzes the oxidation of (S)-lactate (L-lactate) to pyruvate, with a reduction of O2 to H2O2. Is also able to use glycolate and to a lesser extent 2-hydroxyoctadecanoate as substrate. The polypeptide is L-lactate oxidase (Roseobacter sp. (strain GAI101)).